Here is a 261-residue protein sequence, read N- to C-terminus: DNA repair protein RecO (261 aa).

Belongs to the RecO family.

In terms of biological role, involved in DNA repair and RecF pathway recombination. In Chlorobium phaeobacteroides (strain BS1), this protein is DNA repair protein RecO.